A 252-amino-acid polypeptide reads, in one-letter code: UPF0736 protein OB1207 (252 aa).

This sequence belongs to the UPF0736 family.

This chain is UPF0736 protein OB1207, found in Oceanobacillus iheyensis (strain DSM 14371 / CIP 107618 / JCM 11309 / KCTC 3954 / HTE831).